An 86-amino-acid chain; its full sequence is Protein Tat (86 aa).

Residues 1-24 are interaction with human CREBBP; that stretch reads MEPVDPRLEPWKHPGSQPKTACTN. The interval 1–48 is transactivation; the sequence is MEPVDPRLEPWKHPGSQPKTACTNCYCKKCCFHCQVCFITKALGISYG. Zn(2+) is bound by residues C22, C25, and C27. Residues 22–37 form a cysteine-rich region; that stretch reads CTNCYCKKCCFHCQVC. Position 28 is an N6-acetyllysine; by host PCAF (K28). C30, H33, C34, and C37 together coordinate Zn(2+). The segment at 38-48 is core; that stretch reads FITKALGISYG. Residues 48–58 are compositionally biased toward basic residues; it reads GRKKRRQRRRA. Positions 48–86 are disordered; it reads GRKKRRQRRRAPQGSQTHQVSLSKQPTSQSRGDPTGPKE. The Nuclear localization signal, RNA-binding (TAR), and protein transduction signature appears at 49-57; it reads RKKRRQRRR. Residues 49–86 form an interaction with the host capping enzyme RNGTT region; sequence RKKRRQRRRAPQGSQTHQVSLSKQPTSQSRGDPTGPKE. K50 and K51 each carry N6-acetyllysine; by host EP300 and GCN5L2. Asymmetric dimethylarginine; by host PRMT6 is present on residues R52 and R53. Polar residues predominate over residues 60–79; it reads QGSQTHQVSLSKQPTSQSRG. Residue K71 forms a Glycyl lysine isopeptide (Lys-Gly) (interchain with G-Cter in ubiquitin) linkage. The Cell attachment site signature appears at 78–80; that stretch reads RGD.

It belongs to the lentiviruses Tat family. As to quaternary structure, interacts with host CCNT1. Associates with the P-TEFb complex composed at least of Tat, P-TEFb (CDK9 and CCNT1), TAR RNA, RNA Pol II. Recruits the HATs CREBBP, TAF1/TFIID, EP300, PCAF and GCN5L2. Interacts with host KAT5/Tip60; this interaction targets the latter to degradation. Interacts with the host deacetylase SIRT1. Interacts with host capping enzyme RNGTT; this interaction stimulates RNGTT. Binds to host KDR, and to the host integrins ITGAV/ITGB3 and ITGA5/ITGB1. Interacts with host KPNB1/importin beta-1 without previous binding to KPNA1/importin alpha-1. Interacts with EIF2AK2. Interacts with host nucleosome assembly protein NAP1L1; this interaction may be required for the transport of Tat within the nucleus, since the two proteins interact at the nuclear rim. Interacts with host C1QBP/SF2P32; this interaction involves lysine-acetylated Tat. Interacts with the host chemokine receptors CCR2, CCR3 and CXCR4. Interacts with host DPP4/CD26; this interaction may trigger an anti-proliferative effect. Interacts with host LDLR. Interacts with the host extracellular matrix metalloproteinase MMP1. Interacts with host PRMT6; this interaction mediates Tat's methylation. Interacts with, and is ubiquitinated by MDM2/Hdm2. Interacts with host PSMC3 and HTATIP2. Interacts with STAB1; this interaction may overcome SATB1-mediated repression of IL2 and IL2RA (interleukin) in T cells by binding to the same domain than HDAC1. Interacts (when acetylated) with human CDK13, thereby increasing HIV-1 mRNA splicing and promoting the production of the doubly spliced HIV-1 protein Nef. Interacts with host TBP; this interaction modulates the activity of transcriptional pre-initiation complex. Interacts with host RELA. Interacts with host PLSCR1; this interaction negatively regulates Tat transactivation activity by altering its subcellular distribution. Post-translationally, asymmetrical arginine methylation by host PRMT6 seems to diminish the transactivation capacity of Tat and affects the interaction with host CCNT1. Acetylation by EP300, CREBBP, GCN5L2/GCN5 and PCAF regulates the transactivation activity of Tat. EP300-mediated acetylation of Lys-50 promotes dissociation of Tat from the TAR RNA through the competitive binding to PCAF's bromodomain. In addition, the non-acetylated Tat's N-terminus can also interact with PCAF. PCAF-mediated acetylation of Lys-28 enhances Tat's binding to CCNT1. Lys-50 is deacetylated by SIRT1. In terms of processing, polyubiquitination by host MDM2 does not target Tat to degradation, but activates its transactivation function and fosters interaction with CCNT1 and TAR RNA. Post-translationally, phosphorylated by EIF2AK2 on serine and threonine residues adjacent to the basic region important for TAR RNA binding and function. Phosphorylation of Tat by EIF2AK2 is dependent on the prior activation of EIF2AK2 by dsRNA.

It localises to the host nucleus. The protein resides in the host nucleolus. It is found in the host cytoplasm. The protein localises to the secreted. Transcriptional activator that increases RNA Pol II processivity, thereby increasing the level of full-length viral transcripts. Recognizes a hairpin structure at the 5'-LTR of the nascent viral mRNAs referred to as the transactivation responsive RNA element (TAR) and recruits the cyclin T1-CDK9 complex (P-TEFb complex) that will in turn hyperphosphorylate the RNA polymerase II to allow efficient elongation. The CDK9 component of P-TEFb and other Tat-activated kinases hyperphosphorylate the C-terminus of RNA Pol II that becomes stabilized and much more processive. Other factors such as HTATSF1/Tat-SF1, SUPT5H/SPT5, and HTATIP2 are also important for Tat's function. Besides its effect on RNA Pol II processivity, Tat induces chromatin remodeling of proviral genes by recruiting the histone acetyltransferases (HATs) CREBBP, EP300 and PCAF to the chromatin. This also contributes to the increase in proviral transcription rate, especially when the provirus integrates in transcriptionally silent region of the host genome. To ensure maximal activation of the LTR, Tat mediates nuclear translocation of NF-kappa-B by interacting with host RELA. Through its interaction with host TBP, Tat may also modulate transcription initiation. Tat can reactivate a latently infected cell by penetrating in it and transactivating its LTR promoter. In the cytoplasm, Tat is thought to act as a translational activator of HIV-1 mRNAs. Its function is as follows. Extracellular circulating Tat can be endocytosed by surrounding uninfected cells via the binding to several surface receptors such as CD26, CXCR4, heparan sulfate proteoglycans (HSPG) or LDLR. Neurons are rarely infected, but they internalize Tat via their LDLR. Through its interaction with nuclear HATs, Tat is potentially able to control the acetylation-dependent cellular gene expression. Modulates the expression of many cellular genes involved in cell survival, proliferation or in coding for cytokines or cytokine receptors. Tat plays a role in T-cell and neurons apoptosis. Tat induced neurotoxicity and apoptosis probably contribute to neuroAIDS. Circulating Tat also acts as a chemokine-like and/or growth factor-like molecule that binds to specific receptors on the surface of the cells, affecting many cellular pathways. In the vascular system, Tat binds to ITGAV/ITGB3 and ITGA5/ITGB1 integrins dimers at the surface of endothelial cells and competes with bFGF for heparin-binding sites, leading to an excess of soluble bFGF. The sequence is that of Protein Tat from Human immunodeficiency virus type 1 group M subtype B (isolate PCV12) (HIV-1).